Here is a 94-residue protein sequence, read N- to C-terminus: Phosphoribosyl-ATP pyrophosphatase (94 aa).

The protein belongs to the PRA-PH family.

Its subcellular location is the cytoplasm. The enzyme catalyses 1-(5-phospho-beta-D-ribosyl)-ATP + H2O = 1-(5-phospho-beta-D-ribosyl)-5'-AMP + diphosphate + H(+). It participates in amino-acid biosynthesis; L-histidine biosynthesis; L-histidine from 5-phospho-alpha-D-ribose 1-diphosphate: step 2/9. The protein is Phosphoribosyl-ATP pyrophosphatase of Saccharolobus islandicus (strain M.16.27) (Sulfolobus islandicus).